We begin with the raw amino-acid sequence, 412 residues long: Argininosuccinate synthase (412 aa).

Residues 24–32 and alanine 50 contribute to the ATP site; that span reads AFSGGLDTS. Positions 103 and 108 each coordinate L-citrulline. Glycine 132 provides a ligand contact to ATP. L-aspartate contacts are provided by threonine 134, asparagine 138, and aspartate 139. Residue asparagine 138 coordinates L-citrulline. Arginine 142 contributes to the L-citrulline binding site.

The protein belongs to the argininosuccinate synthase family. Type 1 subfamily. As to quaternary structure, homotetramer.

Its subcellular location is the cytoplasm. It carries out the reaction L-citrulline + L-aspartate + ATP = 2-(N(omega)-L-arginino)succinate + AMP + diphosphate + H(+). The protein operates within amino-acid biosynthesis; L-arginine biosynthesis; L-arginine from L-ornithine and carbamoyl phosphate: step 2/3. This chain is Argininosuccinate synthase, found in Xanthomonas axonopodis pv. citri (strain 306).